A 2462-amino-acid polypeptide reads, in one-letter code: Non-reducing polyketide synthase ausA (2462 aa).

An N-terminal acylcarrier protein transacylase domain (SAT) region spans residues 16–253 (VFFGPVYPEL…HTADHIPAMK (238 aa)). The region spanning 385–801 (SAPIAVTGFA…GSNAVIVVKE (417 aa)) is the Ketosynthase family 3 (KS3) domain. Catalysis depends on for beta-ketoacyl synthase activity residues Cys-550, His-685, and His-724. Residues 904–1208 (LCFGGQTGDT…LPIDLQESTA (305 aa)) are malonyl-CoA:ACP transacylase (MAT) domain. The active-site For acyl/malonyl transferase activity is Ser-991. The N-terminal hotdog fold stretch occupies residues 1274 to 1403 (HDDGLLQLVE…GKVLLDPQAA (130 aa)). The region spanning 1274-1581 (HDDGLLQLVE…FTSVSIQSLK (308 aa)) is the PKS/mFAS DH domain. The segment at 1277-1580 (GLLQLVERDA…TFTSVSIQSL (304 aa)) is product template (PT) domain. His-1307 acts as the Proton acceptor; for dehydratase activity in catalysis. The C-terminal hotdog fold stretch occupies residues 1431–1581 (SSNGLKRATV…FTSVSIQSLK (151 aa)). Catalysis depends on Asp-1489, which acts as the Proton donor; for dehydratase activity. One can recognise a Carrier domain in the interval 1613–1690 (VSDDHHLRAV…GLAHRISPSS (78 aa)). Ser-1650 is modified (O-(pantetheine 4'-phosphoryl)serine). The methyltransferase (CMeT) domain stretch occupies residues 1850 to 2083 (QHASEHKLLR…GFNWVDWTDN (234 aa)). The thioesterase (TE) domain stretch occupies residues 2112 to 2462 (TPARVETVRY…YEFLRQHVAV (351 aa)). Residues Ser-2235, Asp-2398, and His-2430 each act as for thioesterase activity in the active site.

It carries out the reaction 3 malonyl-CoA + acetyl-CoA + 2 S-adenosyl-L-methionine = 3,5-dimethylorsellinate + 2 S-adenosyl-L-homocysteine + 3 CO2 + 4 CoA. It functions in the pathway secondary metabolite biosynthesis; terpenoid biosynthesis. In terms of biological role, non-reducing polyketide synthase; part of the gene cluster that mediates the biosynthesis of calidodehydroaustin, a fungal meroterpenoid. The first step of the pathway is the synthesis of 3,5-dimethylorsellinic acid by the polyketide synthase ausA. 3,5-dimethylorsellinic acid is then prenylated by the polyprenyl transferase ausN. Further epoxidation by the FAD-dependent monooxygenase ausM and cyclization by the probable terpene cyclase ausL lead to the formation of protoaustinoid A. Protoaustinoid A is then oxidized to spiro-lactone preaustinoid A3 by the combined action of the FAD-binding monooxygenases ausB and ausC, and the dioxygenase ausE. Acid-catalyzed keto-rearrangement and ring contraction of the tetraketide portion of preaustinoid A3 by ausJ lead to the formation of preaustinoid A4. The aldo-keto reductase ausK, with the help of ausH, is involved in the next step by transforming preaustinoid A4 into isoaustinone which is in turn hydroxylated by the P450 monooxygenase ausI to form austinolide. The cytochrome P450 monooxygenase ausG modifies austinolide to austinol. Austinol is further acetylated to austin by the O-acetyltransferase ausP, which spontaneously changes to dehydroaustin. The cytochrome P450 monooxygenase ausR then converts dehydroaustin is into 7-dehydrodehydroaustin. The hydroxylation catalyzed by ausR permits the O-acetyltransferase ausQ to add an additional acetyl group to the molecule, leading to the formation of acetoxydehydroaustin. The short chain dehydrogenase ausT catalyzes the reduction of the double bond present between carbon atoms 1 and 2 to convert 7-dehydrodehydroaustin into 1,2-dihydro-7-hydroxydehydroaustin. AusQ catalyzes not only an acetylation reaction but also the addition of the PKS ausV diketide product to 1,2-dihydro-7-hydroxydehydroaustin, forming precalidodehydroaustin. Finally, the iron/alpha-ketoglutarate-dependent dioxygenase converts precalidodehydroaustin into calidodehydroaustin. The protein is Non-reducing polyketide synthase ausA of Aspergillus calidoustus.